A 229-amino-acid polypeptide reads, in one-letter code: MEFIIISVGNEILSGDITNTNAAYMAKKLTRAGHKVKKIITIPDDVNIIAEEVRKASKEADFVLVTGGLGATHDDVTAEGIARAFNRKLVISKEVYEWLSKLSKNEEAVRKISSVPEGSEIVWNDVGAAPAFIVENVAVMPGVPAEMENTFEKILERFEKGEYHEEVVKVNGFEVKIVDKLNQVVRDNPDVEIGSYPKPGYVMVKFSGRDKEKVKKAVKQFEELLNDKR.

The protein belongs to the CinA family.

This Archaeoglobus fulgidus (strain ATCC 49558 / DSM 4304 / JCM 9628 / NBRC 100126 / VC-16) protein is Protein AF_2251.